The primary structure comprises 316 residues: Coproporphyrin III ferrochelatase (316 aa).

Fe-coproporphyrin III-binding positions include Tyr-13, Arg-30, Arg-46 to Tyr-47, Ser-54, and Tyr-125. The Fe(2+) site is built by His-183 and Glu-264.

This sequence belongs to the ferrochelatase family.

Its subcellular location is the cytoplasm. The enzyme catalyses Fe-coproporphyrin III + 2 H(+) = coproporphyrin III + Fe(2+). Its pathway is porphyrin-containing compound metabolism; protoheme biosynthesis. Involved in coproporphyrin-dependent heme b biosynthesis. Catalyzes the insertion of ferrous iron into coproporphyrin III to form Fe-coproporphyrin III. In Geobacillus kaustophilus (strain HTA426), this protein is Coproporphyrin III ferrochelatase.